Here is a 519-residue protein sequence, read N- to C-terminus: SMR domain-containing protein At5g58720 (519 aa).

A compositionally biased stretch (basic residues) spans 1 to 15; the sequence is MKQKNQHKKKKKRSC. Disordered stretches follow at residues 1-47 and 92-128; these read MKQK…REIE and ESGDDPSTSSVASGSSGQETASTSEYGAGSSSSCSED. A compositionally biased stretch (basic and acidic residues) spans 28–47; that stretch reads GNKKDVEEERKDGEGKREIE. A compositionally biased stretch (low complexity) spans 98–127; it reads STSSVASGSSGQETASTSEYGAGSSSSCSE. Positions 428–502 constitute a Smr domain; that stretch reads IDLHGQHVKP…NRGTLLIKLD (75 aa).

In terms of assembly, interacts with PRL1.

This Arabidopsis thaliana (Mouse-ear cress) protein is SMR domain-containing protein At5g58720.